A 506-amino-acid polypeptide reads, in one-letter code: Maturase K (506 aa).

This sequence belongs to the intron maturase 2 family. MatK subfamily.

The protein resides in the plastid. It localises to the chloroplast. Functionally, usually encoded in the trnK tRNA gene intron. Probably assists in splicing its own and other chloroplast group II introns. The polypeptide is Maturase K (Lactuca sativa (Garden lettuce)).